The sequence spans 216 residues: Uracil phosphoribosyltransferase (216 aa).

Residues Arg-32, Arg-41, 75-78, and Lys-77 contribute to the GTP site; that span reads MGKI. At Ser-82 the chain carries Phosphoserine. Arg-85 contacts 5-phospho-alpha-D-ribose 1-diphosphate. A GTP-binding site is contributed by Arg-102. Arg-110 provides a ligand contact to 5-phospho-alpha-D-ribose 1-diphosphate. Position 131 (Arg-131) interacts with GTP. Residues Asp-137 and 137 to 145 each bind 5-phospho-alpha-D-ribose 1-diphosphate; that span reads DPMLATGGS. Tyr-201 is a D-ribose 5-phosphate binding site. Uracil contacts are provided by residues Leu-202 and 207–209; that span reads GDF. Residue Asp-208 coordinates 5-phospho-alpha-D-ribose 1-diphosphate.

Belongs to the UPRTase family. The cofactor is Mg(2+).

It catalyses the reaction UMP + diphosphate = 5-phospho-alpha-D-ribose 1-diphosphate + uracil. Its pathway is pyrimidine metabolism; UMP biosynthesis via salvage pathway; UMP from uracil: step 1/1. With respect to regulation, allosterically activated by GTP. Its function is as follows. Catalyzes the conversion of uracil and 5-phospho-alpha-D-ribose 1-diphosphate (PRPP) to UMP and diphosphate in the pyrimidine salvage pathway. This Saccharomyces cerevisiae (strain ATCC 204508 / S288c) (Baker's yeast) protein is Uracil phosphoribosyltransferase (FUR1).